Reading from the N-terminus, the 86-residue chain is Small ribosomal subunit protein bS16 (86 aa).

This sequence belongs to the bacterial ribosomal protein bS16 family.

The sequence is that of Small ribosomal subunit protein bS16 from Trichormus variabilis (strain ATCC 29413 / PCC 7937) (Anabaena variabilis).